Consider the following 267-residue polypeptide: Regulatory protein VirG (267 aa).

Positions 29–143 (HVLLVDDDVA…EFLARIRVAL (115 aa)) constitute a Response regulatory domain. D78 bears the 4-aspartylphosphate mark. A DNA-binding region (ompR/PhoB-type) is located at residues 155–255 (RRSFCFTDWT…ARGAGYFFDA (101 aa)).

Phosphorylated by wide host range (WHR) VirA protein.

The protein resides in the cytoplasm. Functionally, virG is required for the positive regulation of at least two vir loci encoded by the Ti plasmid of A.tumefaciens. In Agrobacterium tumefaciens (strain 15955), this protein is Regulatory protein VirG (virG).